The sequence spans 432 residues: T-box transcription factor T (432 aa).

Residues 49–217 (LWTRFKELTN…HNPFAKAFLD (169 aa)) constitute a DNA-binding region (T-box). A disordered region spans residues 274-306 (CERYSSLRNHRSAPYPSPYTHRNNSPNNLADNS). A compositionally biased stretch (polar residues) spans 293–306 (THRNNSPNNLADNS).

In terms of assembly, when not bound to DNA, exists as a monomer. Binds DNA as a dimer. In terms of tissue distribution, expressed in presumptive mesodermal cells around the blastopore, and then in the notochord.

It localises to the nucleus. Its function is as follows. Involved in the transcriptional regulation of genes required for mesoderm formation and differentiation. Binds to the palindromic T site 5'-TTCACACCTAGGTGTGAA-3' DNA sequence. Causes dorsal mesodermal differentiation of animal cap ectoderm when co-expressed with wnt8 and noggin. None of these molecules causes dorsal mesoderm formation when expressed alone. Establishes the left/right axis at early gastrula stage by directly up-regulating mesodermal expression of zic3. The polypeptide is T-box transcription factor T (Xenopus laevis (African clawed frog)).